Here is a 652-residue protein sequence, read N- to C-terminus: DNA mismatch repair protein MutL (652 aa).

Disordered regions lie at residues 357–377 (LGAN…NYPS) and 425–457 (PDKG…NSTD). A compositionally biased stretch (polar residues) spans 365–375 (SHSSNTPTLNY).

This sequence belongs to the DNA mismatch repair MutL/HexB family.

Its function is as follows. This protein is involved in the repair of mismatches in DNA. It is required for dam-dependent methyl-directed DNA mismatch repair. May act as a 'molecular matchmaker', a protein that promotes the formation of a stable complex between two or more DNA-binding proteins in an ATP-dependent manner without itself being part of a final effector complex. This Colwellia psychrerythraea (strain 34H / ATCC BAA-681) (Vibrio psychroerythus) protein is DNA mismatch repair protein MutL.